We begin with the raw amino-acid sequence, 739 residues long: NAD(P)H-quinone oxidoreductase subunit 5, chloroplastic (739 aa).

16 consecutive transmembrane segments (helical) span residues 9–29, 39–59, 89–109, 125–145, 147–167, 185–205, 219–239, 258–278, 280–300, 327–347, 354–374, 396–416, 425–445, 542–562, 610–630, and 719–739; these read WVIP…LILI, IWAF…VQLS, IDPL…LVLI, FVYI…SNLI, IYFF…FWFT, GDFG…SLEF, NGVN…GAVA, TPIS…FLLA, LLPL…VGTI, LGYM…FHLI, ALLF…VGYS, TTFL…CFWS, WLYS…TAFY, LFPL…GISF, TLAI…YSFF, and ISSY…FFLS.

This sequence belongs to the complex I subunit 5 family. In terms of assembly, NDH is composed of at least 16 different subunits, 5 of which are encoded in the nucleus.

The protein resides in the plastid. It localises to the chloroplast thylakoid membrane. It carries out the reaction a plastoquinone + NADH + (n+1) H(+)(in) = a plastoquinol + NAD(+) + n H(+)(out). The catalysed reaction is a plastoquinone + NADPH + (n+1) H(+)(in) = a plastoquinol + NADP(+) + n H(+)(out). Functionally, NDH shuttles electrons from NAD(P)H:plastoquinone, via FMN and iron-sulfur (Fe-S) centers, to quinones in the photosynthetic chain and possibly in a chloroplast respiratory chain. The immediate electron acceptor for the enzyme in this species is believed to be plastoquinone. Couples the redox reaction to proton translocation, and thus conserves the redox energy in a proton gradient. This Triticum aestivum (Wheat) protein is NAD(P)H-quinone oxidoreductase subunit 5, chloroplastic (ndhF).